The primary structure comprises 465 residues: Cysteine--tRNA ligase (465 aa).

A Zn(2+)-binding site is contributed by cysteine 27. Residues 29 to 39 (PTVYNFFHIGN) carry the 'HIGH' region motif. Zn(2+) is bound by residues cysteine 207, histidine 232, and glutamate 236. A 'KMSKS' region motif is present at residues 264 to 268 (KMSKS). ATP is bound at residue lysine 267.

This sequence belongs to the class-I aminoacyl-tRNA synthetase family. As to quaternary structure, monomer. The cofactor is Zn(2+).

Its subcellular location is the cytoplasm. It catalyses the reaction tRNA(Cys) + L-cysteine + ATP = L-cysteinyl-tRNA(Cys) + AMP + diphosphate. The chain is Cysteine--tRNA ligase from Clostridium botulinum (strain Langeland / NCTC 10281 / Type F).